Consider the following 488-residue polypeptide: Palmitoleoyl-protein carboxylesterase notum1' (488 aa).

The signal sequence occupies residues 1–19 (MAGTLCVTLLLLLSTIAVG). Asparagine 90 carries N-linked (GlcNAc...) asparagine glycosylation. Residues serine 226, aspartate 334, and histidine 383 each act as charge relay system in the active site.

Belongs to the pectinacetylesterase family. Notum subfamily. Expressed in the egg and through cleavage to gastrulation stages. Enriched in the animal (prospective ectoderm) and dorsal regions in early gastrula. Shows a dynamic expression during embryogenesis, in particular during neural induction and antero-posterior (AP) patterning.

Its subcellular location is the secreted. The enzyme catalyses [Wnt protein]-O-(9Z)-hexadecenoyl-L-serine + H2O = [Wnt protein]-L-serine + (9Z)-hexadecenoate + H(+). Functionally, carboxylesterase that acts as a key negative regulator of the Wnt signaling pathway by specifically mediating depalmitoleoylation of WNT proteins. Serine palmitoleoylation of WNT proteins is required for efficient binding to frizzled receptors. Functions in the prospective ectoderm and is required for neural induction. This Xenopus laevis (African clawed frog) protein is Palmitoleoyl-protein carboxylesterase notum1'.